Here is a 1323-residue protein sequence, read N- to C-terminus: MDQPAGGTGKLRASAGEDDSMELSTCQELLHRLRELEAENSALAQANENQRETYERCLDEVANHVVQALLNQKDLREECIKLKKRVFDLERQNQVLSALLQQKLQLTANSLPQIPLTPLQPPSERPTSPAPNVSEGPATSLPSGLCAGQREVCWEQQLRPGGPGPPATPPPALDALSPFLRKKAQILEVLRALEETDPLLLCSPATPWRPTGQGPGSPEPINGEPCGPPQPEPSPWAPYLLLGPGSLGALLHWERVLGGPGEEEGIRQPWASSRAPPSAQGPSSGPHCAPGSSSSSSSDEAGDPNEAPSPDTLLGALARKQLNLGQLLGDTETYLQAFLAGATGPLSGDQPGPGKPNSPDPGPPQVSKSKGLPKSAWGASTPEATRLGFGATSEGQGPLPFLSMFMGAGDAPLGSRPGHPHSSSQVKSKLQIGPPSPGDAQGPLLPSPARGLKFLKLPPASEKVPSPGGPQLSPQLPRSSRIPCRNSGSDGSPSPLLARRGLGGGELSPEGAQGLPGSPLPCSAMPDSAQLRPSQSTVSTALSPGPVVSPCFENILDLSRSTFRGSPPEPPPSPLQVPTYPQLTLEVPQTPEVLRSPGAPSPGLPESCPYSGPQEKSMDRAGSESPHASRRTPGGSSKKPGQGSGRRPGDPSHTPLRDRLAALGKLKTGPEGPLGPEKNGVPARSSAEKARALVRSGECAGDVPPSARPLEQPEAKGIFRGAVALGTSSLKQQEPGLTDPGARVYSSHSMGARVDLEPISPRSCLTKVELAKSRLAGALCPQMPRTPAKVPTSAPSLGKPKSPHSSPTKLPSKSPTKVVPRPVVPLGTKEPPKPDKVKGPPWADCGSTVGQPTSPVAGPADPSQGSEGPAPHSAIEEKVMKGIEENVLRLQGQERTPGSEAKHRNTSSIASWFGLKKSKLPALNRRTEATKNKDGAGGGSPLRKEVKTEARKLEAESLNISKLMAKAEDLRRALEEEKAYLSRARPRPGGPATVPSPGLGQAQGQLAGMYQGADTFMQQLLNRVDGKELPPKSWREPKPEYGDFQPVSTDPKSPWPACGPRNGLVGPLQGCGKPGKPSSEPGRREEMPSEDSLAEPVSTTHFTACGSLTRTLDSGIGTFPPPDHSSSGTPSKNLPKTKSLRLDPPPGAPPARPPGLTKVPRRAHTLEREVPGIEELLVSGRHPSMPAFPGLLTAPPGHRSHQTCPDDPCEDPGPPPPVQLAKNWTFPNTRTAGSSSDPFLCPPRQLEGLPRTPMALPVDRKQSVDPSRTSTPQGPAFGGSRTPSTSDMGEEGRVASGGAPGLETSESLSDSLYDSLSSCGSQG.

6 disordered regions span residues 1–22 (MDQP…DSME), 113–142 (QIPL…TSLP), 156–175 (QQLR…ALDA), 204–238 (PATP…PWAP), 260–314 (PGEE…DTLL), and 341–714 (GATG…EQPE). The mediates interaction with CDK5RAP2 and is required for homodimerization and microtubule bundle formation stretch occupies residues 1–135 (MDQPAGGTGK…PTSPAPNVSE (135 aa)). Positions 22 to 109 (ELSTCQELLH…LQQKLQLTAN (88 aa)) form a coiled coil. 2 stretches are compositionally biased toward pro residues: residues 162 to 172 (GPGPPATPPPA) and 226 to 236 (CGPPQPEPSPW). The span at 271–298 (ASSRAPPSAQGPSSGPHCAPGSSSSSSS) shows a compositional bias: low complexity. Over residues 353–364 (PGKPNSPDPGPP) the composition is skewed to pro residues. 4 positions are modified to phosphoserine; by CDK1: Ser-436, Ser-447, Ser-466, and Ser-473. Positions 480–483 (SRIP) match the (S/T)X(I/L)P motif 1 motif. 3 positions are modified to phosphoserine: Ser-489, Ser-492, and Ser-494. Polar residues predominate over residues 531-542 (LRPSQSTVSTAL). Position 573 is a phosphoserine; by CDK1 (Ser-573). Residues 647 to 660 (RPGDPSHTPLRDRL) are compositionally biased toward basic and acidic residues. Position 654 is a phosphothreonine (Thr-654). Positions 743–1136 (RVYSSHSMGA…SGTPSKNLPK (394 aa)) are mediates interaction with beta-tubulin and is required for microtubule bundle formation. Ser-760 bears the Phosphoserine; by CDK1 mark. 4 disordered regions span residues 778 to 875 (ALCP…HSAI), 892 to 948 (GQER…EVKT), 979 to 1003 (AYLS…GQAQ), and 1027 to 1323 (KELP…GSQG). A compositionally biased stretch (low complexity) spans 799 to 817 (KPKSPHSSPTKLPSKSPTK). The (S/T)X(I/L)P motif 2 motif lies at 808-811 (TKLP). Positions 918 to 921 (SKLP) match the (S/T)X(I/L)P motif 3; required for interaction with MAPRE1 motif. Residues 925 to 934 (RRTEATKNKD) show a composition bias toward basic and acidic residues. The stretch at 942-985 (LRKEVKTEARKLEAESLNISKLMAKAEDLRRALEEEKAYLSRAR) forms a coiled coil. The segment covering 1027 to 1041 (KELPPKSWREPKPEY) has biased composition (basic and acidic residues). 2 stretches are compositionally biased toward polar residues: residues 1097–1112 (VSTT…TRTL) and 1124–1136 (HSSS…NLPK). A compositionally biased stretch (pro residues) spans 1143–1153 (DPPPGAPPARP). Ser-1184 carries the post-translational modification Phosphoserine. 2 stretches are compositionally biased toward polar residues: residues 1225–1237 (TFPN…SSSD) and 1264–1273 (VDPSRTSTPQ). Positions 1302–1323 (LETSESLSDSLYDSLSSCGSQG) are enriched in low complexity.

Homodimer. Interacts with CDK5RAP2. Interacts with MAPRE1. Interacts with beta-tubulin. CDK1/Cyclin B-dependent phosphorylation mediates its dissociation from centrosomes during mitosis.

Its subcellular location is the cytoplasm. It localises to the cytoskeleton. It is found in the microtubule organizing center. The protein resides in the centrosome. Regulates microtubule organization and stabilization. Promotes microtubule growth and bundling formation and stabilizes microtubules by increasing intense acetylation of microtubules. Both tubulin-binding and homodimer formation are required for NCKAP5L-mediated microtubule bundle formation. The sequence is that of Nck-associated protein 5-like (Nckap5l) from Mus musculus (Mouse).